Consider the following 591-residue polypeptide: MIVLPNKVRIFINDRMKKDIYLGISNFGFENDIDEILGIAHLLEHLLISFDSTIFLANASTSRSYMSFWCKSINSATESDAIRTLVSWFFSNGKLKDNFSLSSIRFHIKELENEYYFRNEVFHCMDILTFLSGGDLYNGGRIDMIDNLNIVRDMLVNRMQRISGSNIVIFVKRLGPGTLDFFNQTFGSLPACPEIIPSSIPVSTNGKIVMTPSPFYTVMVKINPTLDNILGILYLYETYHLIDYETIGNQLYLTVSFIDETEYESFLRGEAILQISQCQRINMNYSDDYMMNIYLNFPWLSHDLYDYITRINDDSKSILISLTNEIYTSIINRDIIVIYPNFSKAMCNTRDTQQHPIVVLDATNDGLIKKPYRSIPLMKRLTSNEIFIRYGDASLMDMITLSLSKQDISLKRNAEGIRVKHSFSADDIQAIMESDSFLKYSRSKPAAMYQYIFLSFFASGNSIDDILTNRDSTLEFSKKTKSKILFGRNARYDVTTKSSFVCGIVRGKLLDKTSLVEMMWDLKKKGLIYSMEFTNLLSKNTFYLFTFTIYTDEVYDYLNTNKLFSAKCLVISTKGDVENFSSLKKDVVIRV.

His-41 serves as a coordination point for Zn(2+). Glu-44 is a catalytic residue. Residues His-45 and Glu-112 each coordinate Zn(2+).

Belongs to the peptidase M44 family. It depends on Zn(2+) as a cofactor. Post-translationally, undergoes proteolytic processing during the course of infection. May be cleaved into 46 kDa and 22 kDa products (Potential).

It localises to the virion. Functionally, probably involved in maturation of some viral proteins by processing them preferentially at Ala-Gly-|-Ser/Thr/Lys motifs. Does not seem to be responsible for the cleavage of major core proteins. The chain is Metalloendopeptidase OPG085 (OPG085) from Variola virus (isolate Human/India/Ind3/1967) (VARV).